Here is a 146-residue protein sequence, read N- to C-terminus: Aspartate 1-decarboxylase (146 aa).

Ser25 serves as the catalytic Schiff-base intermediate with substrate; via pyruvic acid. Ser25 carries the post-translational modification Pyruvic acid (Ser). Position 57 (Thr57) interacts with substrate. Tyr58 acts as the Proton donor in catalysis. 73 to 75 contributes to the substrate binding site; the sequence is GPA.

This sequence belongs to the PanD family. As to quaternary structure, heterooctamer of four alpha and four beta subunits. The cofactor is pyruvate. Is synthesized initially as an inactive proenzyme, which is activated by self-cleavage at a specific serine bond to produce a beta-subunit with a hydroxyl group at its C-terminus and an alpha-subunit with a pyruvoyl group at its N-terminus.

It is found in the cytoplasm. The catalysed reaction is L-aspartate + H(+) = beta-alanine + CO2. The protein operates within cofactor biosynthesis; (R)-pantothenate biosynthesis; beta-alanine from L-aspartate: step 1/1. In terms of biological role, catalyzes the pyruvoyl-dependent decarboxylation of aspartate to produce beta-alanine. In Salinibacter ruber (strain DSM 13855 / M31), this protein is Aspartate 1-decarboxylase.